The sequence spans 196 residues: uncharacterized protein (196 aa).

One can recognise a Macro domain in the interval 1–183 (MREFHYGVHM…RFLFILSDLG (183 aa)).

The protein belongs to the MacroD-type family.

This is an uncharacterized protein from Thermoplasma acidophilum (strain ATCC 25905 / DSM 1728 / JCM 9062 / NBRC 15155 / AMRC-C165).